An 863-amino-acid chain; its full sequence is Adenosylcobalamin biosynthesis bifunctional protein CobDQ (863 aa).

The segment at 1–373 (MNLPEHGGNL…LKSRKKTPSI (373 aa)) is putative threonine-phosphate decarboxylase. O-phospho-L-threonine contacts are provided by residues 6-7 (HG), Asn30, and Asn159. Lys214 is modified (N6-(pyridoxal phosphate)lysine). 2 residues coordinate O-phospho-L-threonine: Arg323 and Arg337. Residues 374 to 863 (MFQGTASNVG…NLIYRKLGLG (490 aa)) are cobyric acid synthase. The GATase cobBQ-type domain occupies 622–810 (RLDVVLIDIP…IHGIFDKDEF (189 aa)). The active-site Nucleophile is Cys704. Residue His802 is part of the active site.

The protein in the N-terminal section; belongs to the class-II pyridoxal-phosphate-dependent aminotransferase family. It in the C-terminal section; belongs to the CobB/CobQ family. CobQ subfamily. Requires pyridoxal 5'-phosphate as cofactor.

The catalysed reaction is O-phospho-L-threonine + H(+) = (R)-1-aminopropan-2-yl phosphate + CO2. It functions in the pathway cofactor biosynthesis; adenosylcobalamin biosynthesis. In terms of biological role, catalyzes two activities which are involved in the adenosylcobalamin biosynthesis: decarboxylates L-threonine-O-3-phosphate to yield (R)-1-amino-2-propanol O-2-phosphate, the precursor for the linkage between the nucleotide loop and the corrin ring in cobalamin, and catalyzes amidations at positions B, D, E, and G on adenosylcobyrinic A,C-diamide. NH(2) groups are provided by glutamine, and one molecule of ATP is hydrogenolyzed for each amidation. In Leptospira interrogans serogroup Icterohaemorrhagiae serovar Lai (strain 56601), this protein is Adenosylcobalamin biosynthesis bifunctional protein CobDQ (cobDQ).